We begin with the raw amino-acid sequence, 559 residues long: Mercuric reductase (559 aa).

One can recognise an HMA domain in the interval 1–64; the sequence is MYLNITGMTC…AVAGLGYKAT (64 aa). Cys10 and Cys13 together coordinate a metal cation. FAD-binding residues include Ala108, Gly128, and Thr133. Cys134 and Cys139 are disulfide-bonded. FAD is bound by residues Lys143, Ala209, Asp401, and Val409. Cys556 and Cys557 together coordinate Hg(2+).

The protein belongs to the class-I pyridine nucleotide-disulfide oxidoreductase family. As to quaternary structure, homodimer. Requires FAD as cofactor.

The enzyme catalyses Hg + NADP(+) + H(+) = Hg(2+) + NADPH. Its function is as follows. Resistance to Hg(2+) in bacteria appears to be governed by a specialized system which includes mercuric reductase. MerA protein is responsible for volatilizing mercury as Hg(0). In Alcaligenes sp, this protein is Mercuric reductase (merA).